Reading from the N-terminus, the 375-residue chain is Queuine tRNA-ribosyltransferase (375 aa).

D89 functions as the Proton acceptor in the catalytic mechanism. Residues 89–93 (DSGGF), D143, Q185, and G212 each bind substrate. The segment at 243-249 (GVGKPED) is RNA binding. The active-site Nucleophile is D262. An RNA binding; important for wobble base 34 recognition region spans residues 267–271 (TRNAR). Zn(2+)-binding residues include C300, C302, C305, and H331.

Belongs to the queuine tRNA-ribosyltransferase family. In terms of assembly, homodimer. Within each dimer, one monomer is responsible for RNA recognition and catalysis, while the other monomer binds to the replacement base PreQ1. Zn(2+) is required as a cofactor.

It carries out the reaction 7-aminomethyl-7-carbaguanine + guanosine(34) in tRNA = 7-aminomethyl-7-carbaguanosine(34) in tRNA + guanine. Its pathway is tRNA modification; tRNA-queuosine biosynthesis. Functionally, catalyzes the base-exchange of a guanine (G) residue with the queuine precursor 7-aminomethyl-7-deazaguanine (PreQ1) at position 34 (anticodon wobble position) in tRNAs with GU(N) anticodons (tRNA-Asp, -Asn, -His and -Tyr). Catalysis occurs through a double-displacement mechanism. The nucleophile active site attacks the C1' of nucleotide 34 to detach the guanine base from the RNA, forming a covalent enzyme-RNA intermediate. The proton acceptor active site deprotonates the incoming PreQ1, allowing a nucleophilic attack on the C1' of the ribose to form the product. After dissociation, two additional enzymatic reactions on the tRNA convert PreQ1 to queuine (Q), resulting in the hypermodified nucleoside queuosine (7-(((4,5-cis-dihydroxy-2-cyclopenten-1-yl)amino)methyl)-7-deazaguanosine). This Pseudoalteromonas translucida (strain TAC 125) protein is Queuine tRNA-ribosyltransferase.